Reading from the N-terminus, the 163-residue chain is ATP synthase subunit delta, mitochondrial (163 aa).

Residues 1–18 (MLARTIQRFSVVAKRGYA) constitute a mitochondrion transit peptide.

This sequence belongs to the ATPase epsilon chain family. In terms of assembly, subunit of the F-type ATPase which has 2 components, CF(1) - the catalytic core - and CF(0) - the membrane proton channel.

It is found in the mitochondrion. Its subcellular location is the mitochondrion inner membrane. In terms of biological role, mitochondrial membrane ATP synthase (F(1)F(0) ATP synthase or Complex V) produces ATP from ADP in the presence of a proton gradient across the membrane which is generated by electron transport complexes of the respiratory chain. F-type ATPases consist of two structural domains, F(1) - containing the extramembraneous catalytic core, and F(0) - containing the membrane proton channel, linked together by a central stalk and a peripheral stalk. During catalysis, ATP turnover in the catalytic domain of F(1) is coupled via a rotary mechanism of the central stalk subunits to proton translocation. Part of the complex F(1) domain and of the central stalk which is part of the complex rotary element. In Caenorhabditis elegans, this protein is ATP synthase subunit delta, mitochondrial.